Consider the following 389-residue polypeptide: Phosphoglycerate kinase (389 aa).

Substrate contacts are provided by residues 21–23 (DLN), arginine 36, 59–62 (HLGR), arginine 112, and arginine 145. ATP-binding positions include lysine 196, glutamate 313, and 342–345 (GGDT).

The protein belongs to the phosphoglycerate kinase family. Monomer.

Its subcellular location is the cytoplasm. It catalyses the reaction (2R)-3-phosphoglycerate + ATP = (2R)-3-phospho-glyceroyl phosphate + ADP. It participates in carbohydrate degradation; glycolysis; pyruvate from D-glyceraldehyde 3-phosphate: step 2/5. The chain is Phosphoglycerate kinase from Histophilus somni (strain 2336) (Haemophilus somnus).